The chain runs to 1092 residues: Electroneutral sodium bicarbonate exchanger 1 (1092 aa).

Disordered stretches follow at residues M1 to G26, L55 to P95, and K243 to A263. Residues M1 to C478 are Extracellular-facing. Over residues Q58–R76 the composition is skewed to basic residues. Positions K243–G255 are enriched in basic and acidic residues. A helical membrane pass occupies residues L479–L499. Residues L500–R507 are Cytoplasmic-facing. Residues I508–A528 traverse the membrane as a helical segment. Residues G529–C565 lie on the Extracellular side of the membrane. A helical transmembrane segment spans residues I566–V586. The Cytoplasmic portion of the chain corresponds to C587 to E595. The chain crosses the membrane as a helical span at residues A596–L616. Residues A617–H687 are Extracellular-facing. 2 disulfide bridges follow: C636-C684 and C638-C672. N-linked (GlcNAc) asparagine glycosylation is found at N646 and N666. Residues G688–V708 form a helical membrane-spanning segment. Residues S709–D731 lie on the Cytoplasmic side of the membrane. Residues F732 to S752 traverse the membrane as a helical segment. Over P753 to N778 the chain is Extracellular. Residues P779 to M799 traverse the membrane as a helical segment. At D800–D824 the chain is on the cytoplasmic side. The chain crosses the membrane as a helical span at residues L825–A845. The Extracellular portion of the chain corresponds to A846–T881. The chain crosses the membrane as a helical span at residues G882–I902. At P903–M904 the chain is on the cytoplasmic side. A helical transmembrane segment spans residues P905–F925. At D926 to C962 the chain is on the extracellular side. A helical transmembrane segment spans residues L963–L983. Topologically, residues A984–N1092 are cytoplasmic.

The protein belongs to the anion exchanger (TC 2.A.31) family. Homodimer. In terms of tissue distribution, expressed in the Purkinje cells and dendrites in the molecular layer of the cerebellum (at protein level). Expressed in the hippocampal neurons (at protein level). Strong expression observed in testis and moderate expression in kidney inner medulla, the submandibular gland, eye, cerebrum and cerebellum.

It is found in the cell membrane. It localises to the apical cell membrane. The protein resides in the basolateral cell membrane. Its subcellular location is the cytoplasmic vesicle. The protein localises to the secretory vesicle. It is found in the synaptic vesicle membrane. The catalysed reaction is 2 hydrogencarbonate(out) + chloride(in) + Na(+)(out) = 2 hydrogencarbonate(in) + chloride(out) + Na(+)(in). Functionally, mediates electroneutral sodium- and carbonate-dependent chloride-HCO3(-) exchange with a Na(+):HCO3(-) stoichiometry of 2:1. Plays a major role in pH regulation in neurons. Mediates sodium reabsorption in the renal cortical collecting ducts. This Rattus norvegicus (Rat) protein is Electroneutral sodium bicarbonate exchanger 1.